Consider the following 270-residue polypeptide: NAD(P)H-hydrate epimerase (270 aa).

The YjeF N-terminal domain occupies 25–234 (FQQLMDLMQN…DLLAPEAIYQ (210 aa)). (6S)-NADPHX is bound at residue 73-77 (DNGGQ). K(+) is bound by residues Asn74 and Asp144. Residues 148–154 (GVGLYGH) and Glu177 each bind (6S)-NADPHX. Residue Thr180 participates in K(+) binding.

It belongs to the NnrE/AIBP family. The cofactor is K(+).

The catalysed reaction is (6R)-NADHX = (6S)-NADHX. It carries out the reaction (6R)-NADPHX = (6S)-NADPHX. Functionally, catalyzes the epimerization of the S- and R-forms of NAD(P)HX, a damaged form of NAD(P)H that is a result of enzymatic or heat-dependent hydration. This is a prerequisite for the S-specific NAD(P)H-hydrate dehydratase to allow the repair of both epimers of NAD(P)HX. The sequence is that of NAD(P)H-hydrate epimerase from Legionella pneumophila subsp. pneumophila (strain Philadelphia 1 / ATCC 33152 / DSM 7513).